A 271-amino-acid polypeptide reads, in one-letter code: Methylthioribulose-1-phosphate dehydratase (271 aa).

Cys-123 lines the substrate pocket. His-141 and His-143 together coordinate Zn(2+). Glu-166 serves as the catalytic Proton donor/acceptor. Residue His-231 participates in Zn(2+) binding.

It belongs to the aldolase class II family. MtnB subfamily. It depends on Zn(2+) as a cofactor.

The protein resides in the cytoplasm. The enzyme catalyses 5-(methylsulfanyl)-D-ribulose 1-phosphate = 5-methylsulfanyl-2,3-dioxopentyl phosphate + H2O. It participates in amino-acid biosynthesis; L-methionine biosynthesis via salvage pathway; L-methionine from S-methyl-5-thio-alpha-D-ribose 1-phosphate: step 2/6. Its function is as follows. Catalyzes the dehydration of methylthioribulose-1-phosphate (MTRu-1-P) into 2,3-diketo-5-methylthiopentyl-1-phosphate (DK-MTP-1-P). This is Methylthioribulose-1-phosphate dehydratase from Candida dubliniensis (strain CD36 / ATCC MYA-646 / CBS 7987 / NCPF 3949 / NRRL Y-17841) (Yeast).